The sequence spans 88 residues: Synaptonemal complex central element protein 3 (88 aa).

Residues 7–75 (EERNYDNMLK…FVNCKEEMEK (69 aa)) are a coiled coil.

Homodimer. Can form higher-order homooligomers. Interacts with SYCP1 (via tetrameric core); the interaction remodels SYCP1 homotetramers to 2:1 heterotrimers with SYCE3. SYCP1/SYCE3 heterotrimers form lattice assemblies as part of the mature synaptonemal complex via both lateral and head-to-head interactions. Interacts with the SYCE1-SIX6OS1 complex; the interaction recruits the SYCE1-SIX6OS1 complex to the central element of the synaptonemal complex. Interacts with the SYCE2-TEX12 complex; the interaction promotes fibrous assembly of SYCE2-TEX12 as part of the synaptonemal complex central element. Interacts with SYCE1. Interacts with SYCE2. Interacts with proteasome subunit PSMA8; to participate in meiosis progression during spermatogenesis. Interacts with SPO16.

It is found in the nucleus. The protein localises to the chromosome. Functionally, major component of the transverse central element of synaptonemal complexes (SCS), formed between homologous chromosomes during meiotic prophase. Required for the assembly of the central element of the synaptonemal complex during meiosis, via remodeling of SYCP1 lattice structures and promoting recruitment of SYCE2-TEX12 and SYCE1-SIX60S1 complexes. Required for chromosome loading of the central element-specific SCS proteins, and for initiating synapsis between homologous chromosomes. Chromosome loading appears to require SYCP1. Required for fertility and normal testis development. The polypeptide is Synaptonemal complex central element protein 3 (Homo sapiens (Human)).